The chain runs to 524 residues: Protopine 6-monooxygenase (524 aa).

A run of 3 helical transmembrane segments spans residues 4-24, 232-252, and 319-339; these read LMLA…VFLY, LASL…DIFQ, and MIMG…SLLM. C462 lines the heme pocket.

It belongs to the cytochrome P450 family. The cofactor is heme.

Its subcellular location is the endoplasmic reticulum membrane. It catalyses the reaction protopine + reduced [NADPH--hemoprotein reductase] + O2 = 6-hydroxyprotopine + oxidized [NADPH--hemoprotein reductase] + H2O + H(+). The protein operates within alkaloid biosynthesis. Functionally, catalyzes the conversion of protopine and allocryptopine to dihydrosanguinarine and dihydrochelerythrine, respectively, in the biosynthesis of isoquinoline alkaloid sanguinarine. This chain is Protopine 6-monooxygenase (CYP82N2v2), found in Eschscholzia californica (California poppy).